The primary structure comprises 452 residues: Keratin, type I cytoskeletal 42 (452 aa).

Residues 4 to 93 (TTSVRQFSTS…GVSDALLGGS (90 aa)) form a head region. A coil 1A region spans residues 94–129 (EKETMQNLNDRLATYLDRVRALEEANADLEVKIREW). Residues 94 to 405 (EKETMQNLND…RLLEGEDAHL (312 aa)) form the IF rod domain. The tract at residues 130-147 (YKKQGPGPARDYSPYFKT) is linker 1. Residues 148–239 (IEDLRNKILA…KNHEEEMNAL (92 aa)) are coil 1B. The linker 12 stretch occupies residues 240–262 (RGQVGGDVNVEMDAAPGVDLSRI). Residues 263-401 (LNEMRDQYEK…ATYRRLLEGE (139 aa)) are coil 2. The tract at residues 402–452 (DAHLATQYSSSLASQPSREGMVTSRQVRTIVEEVQDGKVVSSREQVHRSTH) is tail.

The protein belongs to the intermediate filament family. Heterodimer of a type I and a type II keratin. Colocalizes with KRT8/KRT18 filament network. As to expression, expressed in nail matrix and nail bed epithelium (at protein level). Also expressed in tongue and digits with weak expression in vibrissae and in both filiform and fungiform papillae of oral mucosa.

It localises to the cytoplasm. This chain is Keratin, type I cytoskeletal 42, found in Mus musculus (Mouse).